Consider the following 786-residue polypeptide: Endonuclease MutS2 (786 aa).

332–339 lines the ATP pocket; it reads GPNTGGKT. Positions 711 to 786 constitute a Smr domain; that stretch reads IDLRGMDSEE…GTGVTVVILK (76 aa).

This sequence belongs to the DNA mismatch repair MutS family. MutS2 subfamily. Homodimer. Binds to stalled ribosomes, contacting rRNA.

In terms of biological role, endonuclease that is involved in the suppression of homologous recombination and thus may have a key role in the control of bacterial genetic diversity. Its function is as follows. Acts as a ribosome collision sensor, splitting the ribosome into its 2 subunits. Detects stalled/collided 70S ribosomes which it binds and splits by an ATP-hydrolysis driven conformational change. Acts upstream of the ribosome quality control system (RQC), a ribosome-associated complex that mediates the extraction of incompletely synthesized nascent chains from stalled ribosomes and their subsequent degradation. Probably generates substrates for RQC. The protein is Endonuclease MutS2 of Clostridium perfringens (strain 13 / Type A).